The sequence spans 132 residues: Large ribosomal subunit protein eL8 (132 aa).

N6-acetyllysine; alternate is present on Lys8. A Glycyl lysine isopeptide (Lys-Gly) (interchain with G-Cter in SUMO2); alternate cross-link involves residue Lys8. Lys36 is covalently cross-linked (Glycyl lysine isopeptide (Lys-Gly) (interchain with G-Cter in SUMO2)). An N6-acetyllysine modification is found at Lys128.

Belongs to the eukaryotic ribosomal protein eL8 family. As to quaternary structure, component of the large ribosomal subunit. Interacts with CRY1. Interacts with DICER1, AGO2, TARBP2, MOV10 and EIF6; they form a large RNA-induced silencing complex (RISC).

It is found in the cytoplasm. Functionally, component of the large ribosomal subunit. The ribosome is a large ribonucleoprotein complex responsible for the synthesis of proteins in the cell. The chain is Large ribosomal subunit protein eL8 (RPL7A) from Sus scrofa (Pig).